The primary structure comprises 456 residues: tRNA (guanine(37)-N(1))-methyltransferase (456 aa).

S-adenosyl-L-methionine-binding positions include histidine 246, 284-285 (DL), 310-311 (DG), and asparagine 336.

This sequence belongs to the class I-like SAM-binding methyltransferase superfamily. TRM5/TYW2 family. As to quaternary structure, monomer.

Its subcellular location is the mitochondrion matrix. The protein localises to the nucleus. It is found in the cytoplasm. It carries out the reaction guanosine(37) in tRNA + S-adenosyl-L-methionine = N(1)-methylguanosine(37) in tRNA + S-adenosyl-L-homocysteine + H(+). Its function is as follows. Specifically methylates the N1 position of guanosine-37 in various cytoplasmic and mitochondrial tRNAs. Methylation is not dependent on the nature of the nucleoside 5' of the target nucleoside. This is the first step in the biosynthesis of wybutosine (yW), a modified base adjacent to the anticodon of tRNAs and required for accurate decoding. In Ciona intestinalis (Transparent sea squirt), this protein is tRNA (guanine(37)-N(1))-methyltransferase.